A 476-amino-acid polypeptide reads, in one-letter code: Protein transport protein SEC61 subunit alpha (476 aa).

The Cytoplasmic segment spans residues 1 to 33 (MSSLRFLDLVKPFVPFLPEVQQPETKIPFNQKL). A helical membrane pass occupies residues 34-54 (MWTGLTLLIFLVMSQMPLYGI). Over 55–76 (VSSDTSDPLYWLRMMMASNRGT) the chain is Lumenal. Residues 77-97 (LMELGITPIISSGMVFQLLAG) form a helical membrane-spanning segment. Residues 98-119 (THMIDVNLDLKADRELYQTAQK) lie on the Cytoplasmic side of the membrane. The helical transmembrane segment at 120–140 (LFAVILSIGTATVYVFTGLYG) threads the bilayer. Residues 141 to 146 (PPSDLG) lie on the Lumenal side of the membrane. Residues 147–167 (AGIVFLLILQLVVAGMIVILL) traverse the membrane as a helical segment. At 168-246 (DELLQKGYGL…YRQNLPNIMN (79 aa)) the chain is on the cytoplasmic side. The helical transmembrane segment at 247-267 (LLATLVVFAAVIYLQGFRVEI) threads the bilayer. At 268–361 (PVKSSRQRGA…KDALLDPIHT (94 aa)) the chain is on the lumenal side. The helical transmembrane segment at 362–382 (AVYIAYMLTACAVFSKTWIEV) threads the bilayer. Topologically, residues 383–415 (SGSSPRDVAKQLKDQGLVMAGHREQSMYKELKR) are cytoplasmic. A helical membrane pass occupies residues 416 to 434 (IIPTAAAFGGACIGALSVA). Residues 435-440 (SDLMGA) lie on the Lumenal side of the membrane. The helical transmembrane segment at 441 to 458 (LGSGTGTLLAVTIIYGYF) threads the bilayer. Residues 459 to 476 (EIAAKEGDLQGMKGMIMG) are Cytoplasmic-facing.

Belongs to the SecY/SEC61-alpha family. In terms of assembly, heterotrimeric complex composed of SEC61-alpha, SEC61-beta and SEC61-gamma.

It localises to the endoplasmic reticulum membrane. In terms of biological role, appears to play a crucial role in the insertion of secretory and membrane polypeptides into the ER. It is required for assembly of membrane and secretory proteins and is essential for cell growth. It interacts with other membrane proteins required for protein translocation. Upon binding to SEC62/63 complex, secretory precursor polypeptides may engage SEC61 to begin membrane penetration event. A cycle of assembly and disassembly of SEC62/63 from SEC61 may govern the activity of the translocase. In Neurospora crassa (strain ATCC 24698 / 74-OR23-1A / CBS 708.71 / DSM 1257 / FGSC 987), this protein is Protein transport protein SEC61 subunit alpha (sec-61).